The following is a 266-amino-acid chain: Uracil-DNA glycosylase (266 aa).

The interval methionine 1 to threonine 25 is disordered. Aspartate 97 acts as the Proton acceptor in catalysis.

This sequence belongs to the uracil-DNA glycosylase (UDG) superfamily. UNG family.

The protein localises to the cytoplasm. It catalyses the reaction Hydrolyzes single-stranded DNA or mismatched double-stranded DNA and polynucleotides, releasing free uracil.. Functionally, excises uracil residues from the DNA which can arise as a result of misincorporation of dUMP residues by DNA polymerase or due to deamination of cytosine. The polypeptide is Uracil-DNA glycosylase (Ralstonia nicotianae (strain ATCC BAA-1114 / GMI1000) (Ralstonia solanacearum)).